The following is a 146-amino-acid chain: 3-hydroxyacyl-[acyl-carrier-protein] dehydratase FabZ (146 aa).

Residue H49 is part of the active site.

It belongs to the thioester dehydratase family. FabZ subfamily.

The protein resides in the cytoplasm. The enzyme catalyses a (3R)-hydroxyacyl-[ACP] = a (2E)-enoyl-[ACP] + H2O. Its function is as follows. Involved in unsaturated fatty acids biosynthesis. Catalyzes the dehydration of short chain beta-hydroxyacyl-ACPs and long chain saturated and unsaturated beta-hydroxyacyl-ACPs. The chain is 3-hydroxyacyl-[acyl-carrier-protein] dehydratase FabZ from Pseudomonas syringae pv. tomato (strain ATCC BAA-871 / DC3000).